The following is a 340-amino-acid chain: Uroporphyrinogen decarboxylase (340 aa).

Residues 21–25, aspartate 71, tyrosine 148, serine 203, and histidine 316 contribute to the substrate site; that span reads RQAGR.

The protein belongs to the uroporphyrinogen decarboxylase family. As to quaternary structure, homodimer.

It is found in the cytoplasm. It carries out the reaction uroporphyrinogen III + 4 H(+) = coproporphyrinogen III + 4 CO2. It functions in the pathway porphyrin-containing compound metabolism; protoporphyrin-IX biosynthesis; coproporphyrinogen-III from 5-aminolevulinate: step 4/4. Functionally, catalyzes the decarboxylation of four acetate groups of uroporphyrinogen-III to yield coproporphyrinogen-III. This chain is Uroporphyrinogen decarboxylase, found in Campylobacter jejuni subsp. jejuni serotype O:23/36 (strain 81-176).